The chain runs to 233 residues: Large ribosomal subunit protein uL1 (233 aa).

The protein belongs to the universal ribosomal protein uL1 family. Part of the 50S ribosomal subunit.

Binds directly to 23S rRNA. The L1 stalk is quite mobile in the ribosome, and is involved in E site tRNA release. Functionally, protein L1 is also a translational repressor protein, it controls the translation of the L11 operon by binding to its mRNA. This chain is Large ribosomal subunit protein uL1, found in Shewanella halifaxensis (strain HAW-EB4).